The primary structure comprises 202 residues: Nascent polypeptide-associated complex subunit alpha (202 aa).

The span at 1 to 19 shows a compositional bias: basic and acidic residues; it reads MADPRVEELPDEEVPKTNV. The tract at residues 1-42 is disordered; it reads MADPRVEELPDEEVPKTNVEDAGSSSESEAGDEPTIPGGAAV. One can recognise an NAC-A/B domain in the interval 46-111; it reads SRNEKKARKA…AKIEDLNATA (66 aa). The segment covering 117-126 has biased composition (low complexity); that stretch reads QQLAEAAANE. The interval 117–165 is disordered; sequence QQLAEAAANEHAGHDHEHDHGKGKAPEAEAKKEEEEDDGEEVDESGLEA. Over residues 127–149 the composition is skewed to basic and acidic residues; that stretch reads HAGHDHEHDHGKGKAPEAEAKKE. Acidic residues predominate over residues 150–162; sequence EEEDDGEEVDESG. The region spanning 163–202 is the UBA domain; that stretch reads LEAKDIELVMAQANVSRKKAVKALRENDNDIVNSIMALSI.

The protein belongs to the NAC-alpha family. In terms of assembly, part of the nascent polypeptide-associated complex (NAC), consisting of egd2 and egd1. NAC associates with ribosomes via egd1.

It is found in the cytoplasm. The protein resides in the nucleus. Component of the nascent polypeptide-associated complex (NAC), a dynamic component of the ribosomal exit tunnel, protecting the emerging polypeptides from interaction with other cytoplasmic proteins to ensure appropriate nascent protein targeting. The NAC complex also promotes mitochondrial protein import by enhancing productive ribosome interactions with the outer mitochondrial membrane and blocks the inappropriate interaction of ribosomes translating non-secretory nascent polypeptides with translocation sites in the membrane of the endoplasmic reticulum. Egd2 may also be involved in transcription regulation. This chain is Nascent polypeptide-associated complex subunit alpha (egd2), found in Aspergillus niger (strain ATCC MYA-4892 / CBS 513.88 / FGSC A1513).